A 349-amino-acid chain; its full sequence is D-alanine--D-alanine ligase (349 aa).

Residues 132 to 335 (KHVFEAVGVP…YSDLIEKLVD (204 aa)) form the ATP-grasp domain. 162-217 (VEKLEFPVFVKPANMGSSVGISKVDDLADLQPALSEAYKYDNRVVIEQGVDAREIE) is an ATP binding site. Mg(2+) contacts are provided by Asp289, Glu302, and Asn304.

This sequence belongs to the D-alanine--D-alanine ligase family. Requires Mg(2+) as cofactor. The cofactor is Mn(2+).

Its subcellular location is the cytoplasm. It carries out the reaction 2 D-alanine + ATP = D-alanyl-D-alanine + ADP + phosphate + H(+). The protein operates within cell wall biogenesis; peptidoglycan biosynthesis. In terms of biological role, cell wall formation. In Lactococcus lactis subsp. lactis (strain IL1403) (Streptococcus lactis), this protein is D-alanine--D-alanine ligase.